A 103-amino-acid chain; its full sequence is Small ubiquitin-related modifier 2 (103 aa).

In terms of domain architecture, Ubiquitin-like spans 15 to 92 (AHINLKVKGQ…IDAMLHQTGG (78 aa)). Residue Gly-92 forms a Glycyl lysine isopeptide (Gly-Lys) (interchain with K-? in acceptor proteins) linkage.

It belongs to the ubiquitin family. SUMO subfamily. Interacts with SAE2, SCE1, SIZ1 and MMS21. Interacts with HSFA2. Covalently attached to ABI5, FLD, GTE3, HSFA2 and ICE1.

It is found in the nucleus. Its subcellular location is the cytoplasm. Ubiquitin-like protein which can be covalently attached to target lysines as a monomer. Does not seem to be involved in protein degradation and may function as an antagonist of ubiquitin in the degradation process. Required for the massive protein sumoylation in the nucleus induced by heat shock and controlled by SIZ1. This Arabidopsis thaliana (Mouse-ear cress) protein is Small ubiquitin-related modifier 2.